The primary structure comprises 625 residues: Chaperone protein HtpG (625 aa).

An a; substrate-binding region spans residues 1–330; sequence MAKQVQNFNA…SSDLSLNVSR (330 aa). The tract at residues 331–545 is b; sequence ELLQQDRQVT…SADPSAHMQK (215 aa). The tract at residues 546 to 625 is c; it reads LMAQMGKEYA…MVQAADSTKH (80 aa).

Belongs to the heat shock protein 90 family. In terms of assembly, homodimer.

The protein localises to the cytoplasm. In terms of biological role, molecular chaperone. Has ATPase activity. This is Chaperone protein HtpG from Bdellovibrio bacteriovorus (strain ATCC 15356 / DSM 50701 / NCIMB 9529 / HD100).